Consider the following 1159-residue polypeptide: Cation channel sperm-associated auxiliary subunit gamma (1159 aa).

The N-terminal stretch at 1 to 35 (MCGPAMFPAGPRWPRVRVLQVLWALLAVLLASRRL) is a signal peptide. At 36–1065 (WAIKDFEECT…IHGLPLSPKR (1030 aa)) the chain is on the extracellular side. Cystine bridges form between Cys44-Cys105 and Cys159-Cys165. N-linked (GlcNAc...) asparagine glycosylation is present at Asn102. Asn177 is a glycosylation site (N-linked (GlcNAc...) asparagine). Cys288 and Cys343 are oxidised to a cystine. Asn355 carries N-linked (GlcNAc...) asparagine glycosylation. Cys394 and Cys402 are disulfide-bonded. 2 N-linked (GlcNAc...) asparagine glycosylation sites follow: Asn426 and Asn574. Cystine bridges form between Cys638/Cys860, Cys806/Cys834, Cys882/Cys1046, Cys909/Cys918, and Cys1010/Cys1016. A helical transmembrane segment spans residues 1066–1087 (ALFILMVSLSVFVGLVIFYIAF). Topologically, residues 1088–1159 (CLLWPLVVKG…KEAVERQLMT (72 aa)) are cytoplasmic. Residues 1138–1159 (FSSRMTEDKAEPKEAVERQLMT) are disordered. Over residues 1142–1159 (MTEDKAEPKEAVERQLMT) the composition is skewed to basic and acidic residues.

This sequence belongs to the CATSPERG family. Component of the CatSper complex or CatSpermasome composed of the core pore-forming members CATSPER1, CATSPER2, CATSPER3 and CATSPER4 as well as auxiliary members CATSPERB, CATSPERG, CATSPERD, CATSPERE, CATSPERZ, SCLO6C1, TMEM249, TMEM262 and EFCAB9. HSPA1 may be an additional auxiliary complex member. The core complex members CATSPER1, CATSPER2, CATSPER3 and CATSPER4 form a heterotetrameric channel. The auxiliary CATSPERB, CATSPERG, CATSPERD and CATSPERE subunits form a pavilion-like structure over the pore which stabilizes the complex through interactions with CATSPER4, CATSPER3, CATSPER1 and CATSPER2 respectively. TMEM262/CATSPERH interacts with CATSPERB, further stabilizing the complex. C2CD6/CATSPERT interacts at least with CATSPERD and is required for targeting the CatSper complex in the flagellar membrane.

The protein resides in the cell projection. The protein localises to the cilium. Its subcellular location is the flagellum membrane. Its function is as follows. Auxiliary component of the CatSper complex, a complex involved in sperm cell hyperactivation. Sperm cell hyperactivation is needed for sperm motility which is essential late in the preparation of sperm for fertilization. The polypeptide is Cation channel sperm-associated auxiliary subunit gamma (Macaca fascicularis (Crab-eating macaque)).